Reading from the N-terminus, the 453-residue chain is Alpha-galacturonidase (453 aa).

Position 11–72 (Ile11–Ser72) interacts with NAD(+). Asn151 contributes to the substrate binding site. Residue Cys173 coordinates Mn(2+). Catalysis depends on His174, which acts as the Proton donor. Residue His209 participates in Mn(2+) binding.

Belongs to the glycosyl hydrolase 4 family. In terms of assembly, homotetramer. It depends on NAD(+) as a cofactor. Mn(2+) is required as a cofactor.

It catalyses the reaction [(1-&gt;4)-alpha-D-galacturonosyl](n) + H2O = alpha-D-galacturonate + [(1-&gt;4)-alpha-D-galacturonosyl](n-1). Functionally, alpha-galacturonidase able to catalyze the hydrolysis of the chromogenic substrate p-nitrophenyl-alpha-D-galacturonic acid (pNPalphaGalUA). It is probable that alpha-1,4-di-galacturonate (GalUA(2)) is the naturally occurring substrate. The chain is Alpha-galacturonidase from Thermoanaerobacter italicus (strain DSM 9252 / Ab9).